The sequence spans 377 residues: Serine protease grass (377 aa).

Positions 1–26 (MMIASSLAVLYGIAIVSSMGVQSARA) are cleaved as a signal peptide. The 59-residue stretch at 31–89 (DCTTPDGDQGQCMPFSSCRTIEERLTEAQKAGQKVPADYASYLQKALCGEFNGVRHFCC) folds into the Clip domain. Disulfide bonds link Cys-32–Cys-88, Cys-42–Cys-78, Cys-48–Cys-89, Cys-111–Cys-243, Cys-148–Cys-164, and Cys-188–Cys-197. Residues 91–118 (SANIQHNSKVMSLFKDENFDCGNFLSQR) are linker. In terms of domain architecture, Peptidase S1 spans 119–373 (VSNGYEVKLS…YVQWITDTMA (255 aa)). His-163 serves as the catalytic Charge relay system. The Ca(2+) site is built by Glu-179, Arg-181, Thr-184, and Asp-187. Asp-223 acts as the Charge relay system in catalysis. N-linked (GlcNAc...) asparagine glycosylation is found at Asn-230 and Asn-270. 2 disulfides stabilise this stretch: Cys-290/Cys-304 and Cys-314/Cys-349. Ser-318 (charge relay system) is an active-site residue.

This sequence belongs to the peptidase S1 family. CLIP subfamily. In terms of processing, proteolytically cleaved by a tryspin-like protease which is likely to activate grass.

The protein localises to the secreted. Endopeptidase. Plays a key role in innate immunity by activating the Toll pathway in response to fungal and Gram-positive bacterial infections, presumably downstream of pattern-recognition receptors (PRR), such as PGRP-SA, GNBP1 and GNBP3, and upstream of spz processing enzyme SPE. The protein is Serine protease grass of Drosophila melanogaster (Fruit fly).